Consider the following 269-residue polypeptide: Hydroxypyruvate/pyruvate aldolase (269 aa).

Histidine 48 serves as the catalytic Proton acceptor. The a divalent metal cation site is built by glutamate 152 and aspartate 178.

It belongs to the HpcH/HpaI aldolase family. It depends on a divalent metal cation as a cofactor.

It carries out the reaction D-glyceraldehyde + pyruvate = 2-dehydro-3-deoxy-L-galactonate. In terms of biological role, aldolase which can catalyze in vitro the aldolisation reaction between hydroxypyruvate (HPA) or pyruvate (PA) and D-glyceraldehyde (D-GA). The condensation of pyruvate and D-glyceraldehyde produces 2-dehydro-3-deoxy-L-galactonate as the major product. Has weak activity with hydroxypyruvate and D-glyceraldehyde. This Delftia acidovorans (strain DSM 14801 / SPH-1) protein is Hydroxypyruvate/pyruvate aldolase.